The sequence spans 329 residues: Two pore potassium channel protein sup-9 (329 aa).

Residues 1-8 (MKRQNIRT) lie on the Cytoplasmic side of the membrane. Residues 9–29 (LSLIVCTLTYLLVGAAVFDAL) traverse the membrane as a helical segment. Asn53 carries N-linked (GlcNAc...) asparagine glycosylation. Positions 80-100 (FSGAFYFATTVITTIGYGHST) form an intramembrane region, pore-forming. The short motif at 93–98 (TIGYGH) is the Selectivity filter element. Residues 108–128 (VFCMLYALAGIPLGLIMFQSI) form a helical membrane-spanning segment. Over 129–157 (GERMNTFAAKLLRFIRRAAGKQPIVTSSD) the chain is Cytoplasmic. A helical transmembrane segment spans residues 158 to 178 (LIIFCTGWGGLLIFGGAFMFS). A glycan (N-linked (GlcNAc...) asparagine) is linked at Asn182. Positions 186 to 206 (FDAVYYCFVTLTTIGFGDYVA) form an intramembrane region, pore-forming. Residues 198 to 203 (TIGFGD) carry the Selectivity filter motif. The helical transmembrane segment at 220-240 (VFFSLVFILFGLTVISAAMNL) threads the bilayer. Residues 241 to 329 (LVLRFLTMNT…FSGMTTRPKY (89 aa)) are Cytoplasmic-facing. The tract at residues 289–296 (SLASCSCY) is may be important for regulation by and/or interaction with sup-10. A disordered region spans residues 307 to 329 (HRKHTEPHGGPPTFSGMTTRPKY).

It belongs to the two pore domain potassium channel (TC 1.A.1.8) family. As to quaternary structure, may form a complex with the regulatory subunits unc-93 and sup-10. As to expression, low levels along surface of body-wall muscle cells, in vulval and intestinal muscles and, more weakly, in anal depressor and sphincter muscles. Also expressed in a subset of head neurons.

The protein localises to the membrane. Its function is as follows. Potassium channel involved in coordination of muscle contraction. Activity is regulated by sup-18. This is Two pore potassium channel protein sup-9 from Caenorhabditis elegans.